Here is a 520-residue protein sequence, read N- to C-terminus: MEILIIVIAAVVGLALGFAIAKMLEKKQASGTIASAKKEAGSILKEAKAEGESIKKDKILQAKEKFIELKSEHEKVILSRDKKINDAEKRIKDKESHVSNELGKNKKLNKDLEEKVADYDHRLDFLEKKQEDIDKLHNSKVQQLEVISGLSAEDAKAQLIESLKDTAKADAMSIIQDTVEEAKLTAQQEARKIIINTIQRIGTEEAIENCVSVFNLESDDVKGRIIGREGRNIRALEAATGVEIIVDDTPEAIILSCFDSVRREVARLSLHKLVTDGRIHPARIEEVVKKTRKQIEEEIIDIGKRTVIDLGIHGLQPELIKMVGRMKYRSSYGQNLLQHSREVAKLCGVMAAELGLNPKLAKRAGLLHDIGKVPETETEVPHAILGMQWAEKHGEKPEVCNAIGAHHDEIEMNSLLSPIVQVCDAISGARPGARRQVLDSYIQRLKDLEEIAFGFGGVKKAYAIQAGRELRVIVESEKVSDEKASNLSFEISQKIQTDMTYPGQVKITVIRETRAVNVAK.

A helical transmembrane segment spans residues 1 to 21 (MEILIIVIAAVVGLALGFAIA). A KH domain is found at 210 to 295 (CVSVFNLESD…EVVKKTRKQI (86 aa)). The 94-residue stretch at 336–429 (LLQHSREVAK…VQVCDAISGA (94 aa)) folds into the HD domain.

Belongs to the RNase Y family.

The protein localises to the cell membrane. In terms of biological role, endoribonuclease that initiates mRNA decay. This chain is Ribonuclease Y, found in Christiangramia forsetii (strain DSM 17595 / CGMCC 1.15422 / KT0803) (Gramella forsetii).